Reading from the N-terminus, the 432-residue chain is Enolase (432 aa).

Glutamine 163 serves as a coordination point for (2R)-2-phosphoglycerate. Glutamate 205 (proton donor) is an active-site residue. Positions 242, 285, and 312 each coordinate Mg(2+). 4 residues coordinate (2R)-2-phosphoglycerate: lysine 337, arginine 366, serine 367, and lysine 388. The active-site Proton acceptor is the lysine 337.

This sequence belongs to the enolase family. It depends on Mg(2+) as a cofactor.

The protein resides in the cytoplasm. Its subcellular location is the secreted. It is found in the cell surface. The enzyme catalyses (2R)-2-phosphoglycerate = phosphoenolpyruvate + H2O. It participates in carbohydrate degradation; glycolysis; pyruvate from D-glyceraldehyde 3-phosphate: step 4/5. Catalyzes the reversible conversion of 2-phosphoglycerate (2-PG) into phosphoenolpyruvate (PEP). It is essential for the degradation of carbohydrates via glycolysis. In Bifidobacterium adolescentis (strain ATCC 15703 / DSM 20083 / NCTC 11814 / E194a), this protein is Enolase.